The sequence spans 339 residues: Dihydroorotase (339 aa).

Residues H12 and H14 each coordinate Zn(2+). Substrate-binding positions include 14-16 (HVR) and N40. K94, H133, H167, and D239 together coordinate Zn(2+). K94 carries the post-translational modification N6-carboxylysine. H133 serves as a coordination point for substrate. The active site involves D239. Positions 243 and 255 each coordinate substrate.

Belongs to the metallo-dependent hydrolases superfamily. DHOase family. Class II DHOase subfamily. In terms of assembly, homodimer. Zn(2+) is required as a cofactor.

It catalyses the reaction (S)-dihydroorotate + H2O = N-carbamoyl-L-aspartate + H(+). The protein operates within pyrimidine metabolism; UMP biosynthesis via de novo pathway; (S)-dihydroorotate from bicarbonate: step 3/3. Catalyzes the reversible cyclization of carbamoyl aspartate to dihydroorotate. This is Dihydroorotase from Helicobacter pylori (strain HPAG1).